We begin with the raw amino-acid sequence, 187 residues long: Calcium and integrin-binding family member 3 (187 aa).

EF-hand domains lie at 66–101 (KDNP…MSEM), 103–138 (PRDL…LTRG), and 144–179 (EVSL…APDF). 10 residues coordinate Ca(2+): Asp116, Asn118, Asp120, Tyr122, Asp127, Asp157, Asp159, Asp161, Arg163, and Asp168.

In terms of assembly, monomer and homodimer. Interacts with ITGA2B (via C-terminus cytoplasmic tail region); the interaction is stabilized/increased in a calcium and magnesium-dependent manner. Interacts with TMC1.

Functionally, acts a an auxiliary subunit of the sensory mechanoelectrical transduction (MET) channel in hair cells. Plays a role in regulating hair cell MET channel localization and function. This chain is Calcium and integrin-binding family member 3 (CIB3), found in Homo sapiens (Human).